We begin with the raw amino-acid sequence, 143 residues long: Endoribonuclease YbeY (143 aa).

Zn(2+) is bound by residues H106, H110, and H116.

The protein belongs to the endoribonuclease YbeY family. Requires Zn(2+) as cofactor.

The protein resides in the cytoplasm. Its function is as follows. Single strand-specific metallo-endoribonuclease involved in late-stage 70S ribosome quality control and in maturation of the 3' terminus of the 16S rRNA. This Petrotoga mobilis (strain DSM 10674 / SJ95) protein is Endoribonuclease YbeY.